A 424-amino-acid polypeptide reads, in one-letter code: Nicotinate phosphoribosyltransferase (424 aa).

At His-242 the chain carries Phosphohistidine; by autocatalysis.

The protein belongs to the NAPRTase family. Transiently phosphorylated on a His residue during the reaction cycle. Phosphorylation strongly increases the affinity for substrates and increases the rate of nicotinate D-ribonucleotide production. Dephosphorylation regenerates the low-affinity form of the enzyme, leading to product release.

It catalyses the reaction nicotinate + 5-phospho-alpha-D-ribose 1-diphosphate + ATP + H2O = nicotinate beta-D-ribonucleotide + ADP + phosphate + diphosphate. It participates in cofactor biosynthesis; NAD(+) biosynthesis; nicotinate D-ribonucleotide from nicotinate: step 1/1. In terms of biological role, catalyzes the synthesis of beta-nicotinate D-ribonucleotide from nicotinate and 5-phospho-D-ribose 1-phosphate at the expense of ATP. This chain is Nicotinate phosphoribosyltransferase, found in Bartonella bacilliformis (strain ATCC 35685 / KC583 / Herrer 020/F12,63).